Consider the following 224-residue polypeptide: dTTP/UTP pyrophosphatase (224 aa).

Asp-77 serves as the catalytic Proton acceptor.

It belongs to the Maf family. YhdE subfamily. It depends on a divalent metal cation as a cofactor.

It localises to the cytoplasm. The catalysed reaction is dTTP + H2O = dTMP + diphosphate + H(+). It catalyses the reaction UTP + H2O = UMP + diphosphate + H(+). In terms of biological role, nucleoside triphosphate pyrophosphatase that hydrolyzes dTTP and UTP. May have a dual role in cell division arrest and in preventing the incorporation of modified nucleotides into cellular nucleic acids. This chain is dTTP/UTP pyrophosphatase, found in Dehalococcoides mccartyi (strain CBDB1).